Here is a 545-residue protein sequence, read N- to C-terminus: Chaperonin GroEL (545 aa).

ATP-binding positions include 29-32 (TLGP), lysine 50, 86-90 (DGTTT), glycine 415, and aspartate 495.

This sequence belongs to the chaperonin (HSP60) family. In terms of assembly, forms a cylinder of 14 subunits composed of two heptameric rings stacked back-to-back. Interacts with the co-chaperonin GroES.

The protein resides in the cytoplasm. It catalyses the reaction ATP + H2O + a folded polypeptide = ADP + phosphate + an unfolded polypeptide.. Functionally, together with its co-chaperonin GroES, plays an essential role in assisting protein folding. The GroEL-GroES system forms a nano-cage that allows encapsulation of the non-native substrate proteins and provides a physical environment optimized to promote and accelerate protein folding. The polypeptide is Chaperonin GroEL (Porphyromonas gingivalis (strain ATCC 33277 / DSM 20709 / CIP 103683 / JCM 12257 / NCTC 11834 / 2561)).